The chain runs to 326 residues: Hairy/enhancer-of-split related with YRPW motif-like protein (326 aa).

Residues 1–56 (MKRPRAPSGSDGESDGPIDVGQENDLSQMARPLTTPSPSQMQARKKRRGIIEKRRR) are disordered. A transcriptional repression and interaction with NCOR1 and SIN3A region spans residues 42 to 111 (QARKKRRGII…GGTGFFDARA (70 aa)). In terms of domain architecture, bHLH spans 43-98 (ARKKRRGIIEKRRRDRINSSLSELRRLVPTAFEKQGSSKLEKAEVLQMTVDHLKML). The Orange domain maps to 116–153 (FRSIGFRECLTEVIRYLGVLEGPSSHADPVRIRLLSHL). 2 disordered regions span residues 223 to 260 (HRPAGTIPPTRRNLLPSRGVTSTQRAHLPERPAAPPPT) and 272 to 306 (PIPPCSPTTAPGAGKSDDNVSGSISSPCPSGPTGR). The segment covering 292–305 (SGSISSPCPSGPTG) has biased composition (low complexity).

It belongs to the HEY family. As to quaternary structure, interacts with HES1, HDAC1, NCOR1 and SIN3A. Self-associates. Interacts with GATA4, GATA6, HEY1 and HEY2. In terms of tissue distribution, expressed in heart and at lower levels in brain, lung, muscle, ovary and testis.

The protein localises to the nucleus. Functionally, transcriptional repressor which binds preferentially to the canonical E box sequence 5'-CACGTG-3'. Downstream effector of Notch signaling required for cardiovascular development. Specifically required for the Notch-induced endocardial epithelial to mesenchymal transition, which is itself criticial for cardiac valve and septum development. Represses transcription by the cardiac transcriptional activators GATA4 and GATA6. The chain is Hairy/enhancer-of-split related with YRPW motif-like protein (Heyl) from Mus musculus (Mouse).